Consider the following 491-residue polypeptide: Glutamine synthetase (491 aa).

Positions 23 to 111 (NNVRQVLCAF…MFGNVYEAWG (89 aa)) constitute a GS beta-grasp domain. The 373-residue stretch at 119 to 491 (PRGYVAKRYE…PWEFMKYFDI (373 aa)) folds into the GS catalytic domain. Positions 143 and 145 each coordinate Mg(2+). Glu-225 contributes to the ATP binding site. Mg(2+) contacts are provided by Glu-230 and Glu-238. L-glutamate contacts are provided by residues 282–283 (NA) and Ala-283. Residue His-287 participates in Mg(2+) binding. Residues 289–291 (HQS) and Ser-291 contribute to the ATP site. Residues Arg-344, Glu-350, and Arg-362 each contribute to the L-glutamate site. ATP-binding residues include Arg-362 and Arg-367. Glu-381 provides a ligand contact to Mg(2+). Arg-383 contacts L-glutamate.

It belongs to the glutamine synthetase family. Oligomer of 12 subunits arranged in the form of two hexagons. Requires Mg(2+) as cofactor.

It localises to the cytoplasm. The enzyme catalyses L-glutamate + NH4(+) + ATP = L-glutamine + ADP + phosphate + H(+). Its function is as follows. Probably involved in nitrogen metabolism via ammonium assimilation. Catalyzes the ATP-dependent biosynthesis of glutamine from glutamate and ammonia. Beta-glutamate is a much poorer substrate than alpha-glutamate. The chain is Glutamine synthetase from Archaeoglobus fulgidus (strain ATCC 49558 / DSM 4304 / JCM 9628 / NBRC 100126 / VC-16).